Reading from the N-terminus, the 221-residue chain is Translation initiation factor 6 (221 aa).

This sequence belongs to the eIF-6 family.

Binds to the 50S ribosomal subunit and prevents its association with the 30S ribosomal subunit to form the 70S initiation complex. The protein is Translation initiation factor 6 of Methanospirillum hungatei JF-1 (strain ATCC 27890 / DSM 864 / NBRC 100397 / JF-1).